Here is a 119-residue protein sequence, read N- to C-terminus: Non-specific lipid-transfer protein 12 (119 aa).

The first 24 residues, 1 to 24, serve as a signal peptide directing secretion; the sequence is MAFTPKIITCLIVLTIYMASPTES. Cystine bridges form between cysteine 28–cysteine 75, cysteine 38–cysteine 52, cysteine 53–cysteine 98, and cysteine 73–cysteine 112.

Belongs to the plant LTP family.

In terms of biological role, plant non-specific lipid-transfer proteins transfer phospholipids as well as galactolipids across membranes. May play a role in wax or cutin deposition in the cell walls of expanding epidermal cells and certain secretory tissues. The polypeptide is Non-specific lipid-transfer protein 12 (LTP12) (Arabidopsis thaliana (Mouse-ear cress)).